A 426-amino-acid chain; its full sequence is Phosphomethylpyrimidine synthase (426 aa).

Substrate is bound by residues asparagine 65, methionine 94, tyrosine 123, histidine 162, 184–186 (SRG), 225–228 (DGMR), and glutamate 264. Zn(2+) is bound at residue histidine 268. Tyrosine 291 contributes to the substrate binding site. Residue histidine 332 participates in Zn(2+) binding. The [4Fe-4S] cluster site is built by cysteine 408, cysteine 411, and cysteine 415.

Belongs to the ThiC family. Requires [4Fe-4S] cluster as cofactor.

The enzyme catalyses 5-amino-1-(5-phospho-beta-D-ribosyl)imidazole + S-adenosyl-L-methionine = 4-amino-2-methyl-5-(phosphooxymethyl)pyrimidine + CO + 5'-deoxyadenosine + formate + L-methionine + 3 H(+). The protein operates within cofactor biosynthesis; thiamine diphosphate biosynthesis. Catalyzes the synthesis of the hydroxymethylpyrimidine phosphate (HMP-P) moiety of thiamine from aminoimidazole ribotide (AIR) in a radical S-adenosyl-L-methionine (SAM)-dependent reaction. In Methanocaldococcus jannaschii (strain ATCC 43067 / DSM 2661 / JAL-1 / JCM 10045 / NBRC 100440) (Methanococcus jannaschii), this protein is Phosphomethylpyrimidine synthase.